The sequence spans 147 residues: Ras-related protein RabK2 (147 aa).

GTP contacts are provided by residues 11–15 (NTHGS) and 63–66 (TKSD). Cys145 carries the S-geranylgeranyl cysteine lipid modification.

The protein belongs to the small GTPase superfamily. Rab family.

The protein resides in the cell membrane. The polypeptide is Ras-related protein RabK2 (rabK2) (Dictyostelium discoideum (Social amoeba)).